A 688-amino-acid chain; its full sequence is UvrABC system protein B (688 aa).

The 389-residue stretch at 41 to 429 (ANFEAGLAKQ…AGEVTELVVR (389 aa)) folds into the Helicase ATP-binding domain. 54–61 (GVTGSGKT) lines the ATP pocket. A Beta-hairpin motif is present at residues 107 to 130 (YYDYYQPEAYVPSSDTFIEKDSSI). The Helicase C-terminal domain occupies 446–612 (QVDDLMSEIH…SVERPISDIM (167 aa)). The interval 616–646 (REDAAEKKSGKGRSKSRQVAEETPDYRAMKP) is disordered. The span at 633-645 (QVAEETPDYRAMK) shows a compositional bias: basic and acidic residues. One can recognise a UVR domain in the interval 650–685 (AGKLKSLEQKMYQHAKDLEFEAAAQIRDQIQKLKTA).

This sequence belongs to the UvrB family. As to quaternary structure, forms a heterotetramer with UvrA during the search for lesions. Interacts with UvrC in an incision complex.

Its subcellular location is the cytoplasm. Functionally, the UvrABC repair system catalyzes the recognition and processing of DNA lesions. A damage recognition complex composed of 2 UvrA and 2 UvrB subunits scans DNA for abnormalities. Upon binding of the UvrA(2)B(2) complex to a putative damaged site, the DNA wraps around one UvrB monomer. DNA wrap is dependent on ATP binding by UvrB and probably causes local melting of the DNA helix, facilitating insertion of UvrB beta-hairpin between the DNA strands. Then UvrB probes one DNA strand for the presence of a lesion. If a lesion is found the UvrA subunits dissociate and the UvrB-DNA preincision complex is formed. This complex is subsequently bound by UvrC and the second UvrB is released. If no lesion is found, the DNA wraps around the other UvrB subunit that will check the other stand for damage. The chain is UvrABC system protein B from Xanthomonas oryzae pv. oryzae (strain KACC10331 / KXO85).